A 222-amino-acid polypeptide reads, in one-letter code: PKHD-type hydroxylase cce_3668 (222 aa).

The 98-residue stretch at 78–175 (HIHSLRFSRY…RLVVVGWVHS (98 aa)) folds into the Fe2OG dioxygenase domain. Fe cation-binding residues include His96, Asp98, and His156. Arg166 serves as a coordination point for 2-oxoglutarate.

Fe(2+) serves as cofactor. Requires L-ascorbate as cofactor.

This chain is PKHD-type hydroxylase cce_3668, found in Crocosphaera subtropica (strain ATCC 51142 / BH68) (Cyanothece sp. (strain ATCC 51142)).